The sequence spans 529 residues: Bifunctional purine biosynthesis protein PurH (529 aa).

Residues 1–148 form the MGS-like domain; it reads MQQRRPVRRA…KNHKDVAIVV (148 aa).

This sequence belongs to the PurH family.

It carries out the reaction (6R)-10-formyltetrahydrofolate + 5-amino-1-(5-phospho-beta-D-ribosyl)imidazole-4-carboxamide = 5-formamido-1-(5-phospho-D-ribosyl)imidazole-4-carboxamide + (6S)-5,6,7,8-tetrahydrofolate. The enzyme catalyses IMP + H2O = 5-formamido-1-(5-phospho-D-ribosyl)imidazole-4-carboxamide. It functions in the pathway purine metabolism; IMP biosynthesis via de novo pathway; 5-formamido-1-(5-phospho-D-ribosyl)imidazole-4-carboxamide from 5-amino-1-(5-phospho-D-ribosyl)imidazole-4-carboxamide (10-formyl THF route): step 1/1. Its pathway is purine metabolism; IMP biosynthesis via de novo pathway; IMP from 5-formamido-1-(5-phospho-D-ribosyl)imidazole-4-carboxamide: step 1/1. This chain is Bifunctional purine biosynthesis protein PurH, found in Salmonella paratyphi A (strain ATCC 9150 / SARB42).